Consider the following 642-residue polypeptide: Mini-chromosome maintenance complex-binding protein (642 aa).

Residues 151–161 (ARVSPSTSYTP) are compositionally biased toward polar residues. A disordered region spans residues 151–197 (ARVSPSTSYTPSRHKRSYEDDDDMDLQPNKQKDQHAGARQAGSVGGL). At S154 the chain carries Phosphoserine. T160 carries the phosphothreonine modification. Phosphoserine is present on residues S167 and S298.

This sequence belongs to the MCMBP family. In terms of assembly, interacts with the MCM complex: associates with the MCM3-7 complex which lacks MCM2, while it does not interact with the MCM complex when MCM2 is present (MCM2-7 complex). Interacts with the RPA complex, when composed of all RPA1, RPA2 and RPA3 components, but not with RPA1 or RPA2 alone.

The protein localises to the nucleus. Its function is as follows. Associated component of the MCM complex that acts as a regulator of DNA replication. Binds to the MCM complex during late S phase and promotes the disassembly of the MCM complex from chromatin, thereby acting as a key regulator of pre-replication complex (pre-RC) unloading from replicated DNA. Can dissociate the MCM complex without addition of ATP; probably acts by destabilizing interactions of each individual subunits of the MCM complex. Required for sister chromatid cohesion. The protein is Mini-chromosome maintenance complex-binding protein (MCMBP) of Homo sapiens (Human).